We begin with the raw amino-acid sequence, 148 residues long: Large-conductance mechanosensitive channel (148 aa).

The next 2 helical transmembrane spans lie at 15-35 and 84-104; these read LDMA…KSLV and VGVF…VFLL.

The protein belongs to the MscL family. In terms of assembly, homopentamer.

The protein localises to the cell inner membrane. Functionally, channel that opens in response to stretch forces in the membrane lipid bilayer. May participate in the regulation of osmotic pressure changes within the cell. This chain is Large-conductance mechanosensitive channel, found in Nitratidesulfovibrio vulgaris (strain DSM 19637 / Miyazaki F) (Desulfovibrio vulgaris).